Reading from the N-terminus, the 506-residue chain is Apolipoprotein N-acyltransferase (506 aa).

7 consecutive transmembrane segments (helical) span residues Ala-10–Gly-30, Leu-33–Trp-53, Val-57–Ser-77, Ile-105–Ala-125, Trp-139–Ile-159, Leu-176–Ser-196, and Val-205–Val-225. The region spanning Ile-238–Arg-473 is the CN hydrolase domain. Glu-279 acts as the Proton acceptor in catalysis. The active site involves Lys-336. The active-site Nucleophile is Cys-385. A helical membrane pass occupies residues Tyr-483–Leu-500.

It belongs to the CN hydrolase family. Apolipoprotein N-acyltransferase subfamily.

The protein localises to the cell inner membrane. The catalysed reaction is N-terminal S-1,2-diacyl-sn-glyceryl-L-cysteinyl-[lipoprotein] + a glycerophospholipid = N-acyl-S-1,2-diacyl-sn-glyceryl-L-cysteinyl-[lipoprotein] + a 2-acyl-sn-glycero-3-phospholipid + H(+). Its pathway is protein modification; lipoprotein biosynthesis (N-acyl transfer). Functionally, catalyzes the phospholipid dependent N-acylation of the N-terminal cysteine of apolipoprotein, the last step in lipoprotein maturation. The protein is Apolipoprotein N-acyltransferase of Thermosynechococcus vestitus (strain NIES-2133 / IAM M-273 / BP-1).